The following is a 783-amino-acid chain: Protein SEY1 (783 aa).

At 1 to 677 (MTSQAIQLID…KRSIVTSSTH (677 aa)) the chain is on the cytoplasmic side. The GB1/RHD3-type G domain maps to 33–265 (GFNYHVISVF…YLLKPNYHHK (233 aa)). 43-50 (GSQSSGKS) is a GTP binding site. Positions 449–472 (HEKKLQLRESELNALLSKIKKQLT) form a coiled coil. A helical transmembrane segment spans residues 678-698 (IPIWIYAVIVVLGWNEFMIVI). The Lumenal portion of the chain corresponds to 699–701 (RNP). A helical transmembrane segment spans residues 702–722 (LFVTLALLSIVSFYFIQKFGL). Residues 723 to 783 (WGPVMNVVNT…SSSSGNEDSD (61 aa)) are Cytoplasmic-facing.

This sequence belongs to the TRAFAC class dynamin-like GTPase superfamily. GB1/RHD3 GTPase family. RHD3 subfamily.

The protein localises to the endoplasmic reticulum membrane. Cooperates with the reticulon proteins and tubule-shaping DP1 family proteins to generate and maintain the structure of the tubular endoplasmic reticulum network. Has GTPase activity, which is required for its function in ER organization. The protein is Protein SEY1 of Candida glabrata (strain ATCC 2001 / BCRC 20586 / JCM 3761 / NBRC 0622 / NRRL Y-65 / CBS 138) (Yeast).